The primary structure comprises 475 residues: Legumain (475 aa).

The first 15 residues, Met1–Ala15, serve as a signal peptide directing secretion. The propeptide occupies Arg16–Asp35. Residue His158 is part of the active site. Catalysis depends on Cys200, which acts as the Nucleophile. Cys233 and Cys247 are disulfide-bonded. The N-linked (GlcNAc...) asparagine glycan is linked to Asn300. 2 cysteine pairs are disulfide-bonded: Cys411/Cys441 and Cys423/Cys458.

The protein belongs to the peptidase C13 family. As to quaternary structure, homodimer.

The enzyme catalyses Hydrolysis of proteins and small molecule substrates at -Asn-|-Xaa- bonds.. Its activity is regulated as follows. Repressed by various protease inhibitors including p-chloromercuribenzene sulfonic acid (PCMBS), N-ethylmaleimide, kininogen, elastatinal, cystatin EW and leupeptin. Asparaginyl endopeptidase able to cleave almost all peptide bonds on the carboxyl side of Asn residues, except at the NH2 terminus or second position or with N-glycosylated Asn. Responsible for the maturation (circular permutation) of concanavalin A from its precursor, by performing both cleavage and cleavage-coupled transpeptidation to form conA. The polypeptide is Legumain (Canavalia ensiformis (Jack bean)).